The following is a 299-amino-acid chain: Lipoyl synthase 2 (299 aa).

The [4Fe-4S] cluster site is built by cysteine 45, cysteine 50, cysteine 56, cysteine 71, cysteine 75, cysteine 78, and serine 295. The Radical SAM core domain occupies 57-284 (YASGTATFLL…KSFCSKLGFK (228 aa)).

It belongs to the radical SAM superfamily. Lipoyl synthase family. [4Fe-4S] cluster is required as a cofactor.

It is found in the cytoplasm. It catalyses the reaction [[Fe-S] cluster scaffold protein carrying a second [4Fe-4S](2+) cluster] + N(6)-octanoyl-L-lysyl-[protein] + 2 oxidized [2Fe-2S]-[ferredoxin] + 2 S-adenosyl-L-methionine + 4 H(+) = [[Fe-S] cluster scaffold protein] + N(6)-[(R)-dihydrolipoyl]-L-lysyl-[protein] + 4 Fe(3+) + 2 hydrogen sulfide + 2 5'-deoxyadenosine + 2 L-methionine + 2 reduced [2Fe-2S]-[ferredoxin]. The protein operates within protein modification; protein lipoylation via endogenous pathway; protein N(6)-(lipoyl)lysine from octanoyl-[acyl-carrier-protein]: step 2/2. In terms of biological role, catalyzes the radical-mediated insertion of two sulfur atoms into the C-6 and C-8 positions of the octanoyl moiety bound to the lipoyl domains of lipoate-dependent enzymes, thereby converting the octanoylated domains into lipoylated derivatives. The sequence is that of Lipoyl synthase 2 from Prochlorococcus marinus subsp. pastoris (strain CCMP1986 / NIES-2087 / MED4).